The sequence spans 666 residues: Spartin (666 aa).

An N-acetylmethionine modification is found at M1. The MIT domain occupies 16 to 94 (IREAYKKAFL…LQNVRTRLEI (79 aa)). The disordered stretch occupies residues 124 to 156 (EKLPEPQSFSSAPQHAEVNGNTSTPSAGAVAAP). The segment covering 146–156 (STPSAGAVAAP) has biased composition (low complexity). Residues 190-380 (DSGEFSSVGE…QLDQGNKDVR (191 aa)) are ubiquitin-binding region (UBR) domain. The short motif at 193-200 (EFSSVGEE) is the LC3-interacting region (LIR); mediates interaction with MAP1LC3A AND MAP1LC3C element. The segment at 344 to 398 (EENEFQIPGRTRPSSDQLKEASGTDVKQLDQGNKDVRHKGKRGKRAKDTSSEEVN) is disordered. Residue K362 forms a Glycyl lysine isopeptide (Lys-Gly) (interchain with G-Cter in ubiquitin) linkage. Residues 379 to 388 (VRHKGKRGKR) are compositionally biased toward basic residues. The region spanning 427–611 (ILSGASWVSW…YNINNIGIKA (185 aa)) is the Senescence domain. The required for localization to lipid droplets stretch occupies residues 431 to 503 (ASWVSWGLVK…LVDGVCTVAN (73 aa)). A Phosphoserine modification is found at S470. Residues 636–666 (RENQEGAANVNVRGEKDEQTKEVKEAKKKDK) form a disordered region. The span at 648-666 (RGEKDEQTKEVKEAKKKDK) shows a compositional bias: basic and acidic residues.

In terms of assembly, interacts with ITCH and WWP1. Interacts (via MIT domain) with IST1; leading to the recruitment of SPART to midbodies. Interacts with MAP1LC3A and MAP1LC3C. In terms of processing, ubiquitinated; ubiquitination does not require ITCH and WWP1. Ubiquitously expressed, with highest levels of expression detected in adipose tissue.

It localises to the cytoplasm. Its subcellular location is the midbody. It is found in the lipid droplet. Its function is as follows. Lipophagy receptor that plays an important role in lipid droplet (LD) turnover in motor neurons. Localizes to LDs and interacts with components of the autophagy machinery, such as MAP1LC3A/C proteins to deliver LDs to autophagosomes for degradation via lipophagy. Lipid transfer protein required for lipid droplet degradation, including by lipophagy. Can bind and transfer all lipid species found in lipid droplets, from phospholipids to triglycerides and sterol esters but the direction of lipid transfer by spartin and its cargos are unknown. May be implicated in endosomal trafficking, or microtubule dynamics, or both. Participates in cytokinesis. The polypeptide is Spartin (Homo sapiens (Human)).